Consider the following 770-residue polypeptide: Transducin-like enhancer protein 1 (770 aa).

The tract at residues 1–131 (MFPQSRHPTP…IIGQQQLQAQ (131 aa)) is q domain. Disordered regions lie at residues 128 to 157 (LQAQ…GIPP) and 176 to 348 (HLAI…PAID). The interval 132-199 (HLSHGHGPPV…HHRDREPGTS (68 aa)) is GP domain. Composition is skewed to basic and acidic residues over residues 178–196 (AIKD…DREP) and 209–246 (RGTD…KSDD). Residues 200–268 (NSLLVPDSLR…SPRASPAHSP (69 aa)) form a ccN domain region. A Nuclear localization signal motif is present at residues 225–228 (KKRK). Phosphoserine is present on Ser239. Positions 257 to 266 (PSSPRASPAH) are enriched in low complexity. 3 positions are modified to phosphoserine; by CDK1: Ser259, Ser263, and Ser267. Over residues 267–283 (SPRENGIDKNRLLKKDA) the composition is skewed to basic and acidic residues. An SP domain region spans residues 269 to 450 (RENGIDKNRL…GGKPAYSFHV (182 aa)). The segment covering 284-298 (SSSPASTASSASSTS) has biased composition (low complexity). Position 286 is a phosphoserine (Ser286). The segment covering 300–310 (KSKEMSLHEKA) has biased composition (basic and acidic residues). 6 WD repeats span residues 470–501 (GIPR…HVYT), 528–558 (NRDN…SIWD), 572–602 (SSAP…AVWD), 614–644 (GHTD…RSWD), 696–726 (LHES…NAWR), and 737–767 (KESS…TVYE).

This sequence belongs to the WD repeat Groucho/TLE family. Homooligomer and heterooligomer with other family members. Binds RUNX1, RUNX3, FOXA2, KDM6A, UTY, histone H3, HESX1, ESRRG and the NF-kappa-B subunit RELA. Interacts with HES1 (via WRPW motif). Binds TCF7, LEF1, TCF7L1 and TCF7L2. Interacts with SIX3. Interacts with EFNB1. Interacts with TLE4. Interacts with FOXG1/BF-1; the interaction is inhibited by TLE6/GRG6. Post-translationally, phosphorylated, probably by CDK1. The degree of phosphorylation varies throughout the cell cycle, and is highest at the G2/M transition. Becomes hyperphosphorylated in response to cell differentiation and interaction with HES1 or RUNX1. Ubiquitinated by XIAP/BIRC4. In terms of tissue distribution, in all tissues examined, mostly in brain, liver and muscle.

Its subcellular location is the nucleus. Transcriptional corepressor that binds to a number of transcription factors. Inhibits NF-kappa-B-regulated gene expression. Inhibits the transcriptional activation mediated by FOXA2, and by CTNNB1 and TCF family members in Wnt signaling. Enhances FOXG1/BF-1- and HES1-mediated transcriptional repression. The effects of full-length TLE family members may be modulated by association with dominant-negative AES. Unusual function as coactivator for ESRRG. This is Transducin-like enhancer protein 1 (TLE1) from Homo sapiens (Human).